The sequence spans 427 residues: MKLTEAYHDALAALPATPPLPTAVANATEAAAGSEEGKQDGFSKVKVKEKFMNELNKIPLPPWALVAIAIVAIILGLTCCFCICKKCLLKKKNKKKGKEKGGKNAMTMKDVKEMGKSGKEQALKDEDEDAETGLTTDGKEEEKEDEKLGKLQFSLDYDFQNNQLIVGIIQAAELPALDVGGTSDPYVKVFVLPDKKKKYETKVHRKTLNPVFNESFIFKIPYSELGGKTLVMAVYDFDRFSKHDVIGEAKVPMNTVDFGHVTEEWRDLQGAEKEEQEKLGDICFSLRYVPTAGKLTVVILEAKNLKKMDVGGLSDPYVKIHLMQNGKRLKKKKTTIKKNTLNPYYNESFSFEVPFEQIQKVQVVVTVLDYDKIGKNDAIGKVFVGYNSTAAELRHWSDMLANPRRPIAQWHTLQPEEEVDATLGMKK.

The Vesicular portion of the chain corresponds to Met1–Lys57. A glycan (N-linked (GlcNAc...) asparagine) is linked at Asn26. The helical transmembrane segment at Ile58 to Cys84 threads the bilayer. At Lys85–Lys427 the chain is on the cytoplasmic side. Residues Lys96–Asp145 form a disordered region. A compositionally biased stretch (basic and acidic residues) spans Lys109–Lys124. The phospholipid binding stretch occupies residues Glu141–Asn387. C2 domains follow at residues Lys147–Arg266 and Lys278–His411. The Ca(2+) site is built by Leu177, Asp178, Asp184, Asp236, Phe237, Asp238, Ser241, Lys242, Asp244, Asp309, Asp315, Asp369, Asp371, and Asp377.

The protein belongs to the synaptotagmin family. In terms of assembly, homodimer or homotrimer (possible). Ca(2+) is required as a cofactor. As to expression, forebrain, cerebellum and neuroendocrine cells.

It is found in the cytoplasmic vesicle. Its subcellular location is the secretory vesicle. It localises to the synaptic vesicle membrane. The protein localises to the synapse. May have a regulatory role in the membrane interactions during trafficking of synaptic vesicles at the active zone of the synapse. It binds acidic phospholipids with a specificity that requires the presence of both an acidic head group and a diacyl backbone. This chain is Synaptotagmin-A (P65-A), found in Diplobatis ommata (Ocellated electric ray).